A 453-amino-acid chain; its full sequence is Zinc finger CCCH domain-containing protein 26 (453 aa).

Positions methionine 1–isoleucine 15 are enriched in polar residues. The segment at methionine 1–glutamate 47 is disordered. Serine 2 carries the post-translational modification N-acetylserine. Basic and acidic residues predominate over residues serine 17–glutamate 32. C3H1-type zinc fingers lie at residues arginine 44–threonine 72, glutamate 95–aspartate 112, arginine 129–proline 157, phenylalanine 261–glutamate 289, and arginine 307–leucine 335. Polar residues predominate over residues serine 360–asparagine 379. The tract at residues serine 360–threonine 453 is disordered. Residues glutamate 391–valine 407 are compositionally biased toward basic and acidic residues. A compositionally biased stretch (polar residues) spans proline 413–proline 422. A compositionally biased stretch (basic and acidic residues) spans aspartate 441–threonine 453.

The protein localises to the nucleus. The protein is Zinc finger CCCH domain-containing protein 26 (ZFN2) of Arabidopsis thaliana (Mouse-ear cress).